A 356-amino-acid polypeptide reads, in one-letter code: Sulfate/thiosulfate import ATP-binding protein CysA (356 aa).

The ABC transporter domain maps to 3–237 (IEVKNLVKRF…PKNSFVFHFL (235 aa)). An ATP-binding site is contributed by 35–42 (GPSGSGKT).

The protein belongs to the ABC transporter superfamily. Sulfate/tungstate importer (TC 3.A.1.6) family. As to quaternary structure, the complex is composed of two ATP-binding proteins (CysA), two transmembrane proteins (CysT and CysW) and a solute-binding protein (CysP).

Its subcellular location is the cell inner membrane. It catalyses the reaction sulfate(out) + ATP + H2O = sulfate(in) + ADP + phosphate + H(+). The catalysed reaction is thiosulfate(out) + ATP + H2O = thiosulfate(in) + ADP + phosphate + H(+). Its function is as follows. Part of the ABC transporter complex CysAWTP involved in sulfate/thiosulfate import. Responsible for energy coupling to the transport system. The chain is Sulfate/thiosulfate import ATP-binding protein CysA from Leptospira interrogans serogroup Icterohaemorrhagiae serovar copenhageni (strain Fiocruz L1-130).